Reading from the N-terminus, the 840-residue chain is Lon protease homolog 2, peroxisomal (840 aa).

A Lon N-terminal domain is found at 13-222 (LPLLCTHDGV…KALPLLTRQI (210 aa)). ATP is bound at residue 375–382 (GPPGVGKT). A disordered region spans residues 583-606 (QKVSRSEAPTEQHAEQNTDSKVED). Residues 584-606 (KVSRSEAPTEQHAEQNTDSKVED) show a composition bias toward basic and acidic residues. The 185-residue stretch at 641 to 825 (LTLPGVAIGL…DEVLNAAFDG (185 aa)) folds into the Lon proteolytic domain. Active-site residues include Ser731 and Lys774. A Microbody targeting signal motif is present at residues 838–840 (SKL).

Belongs to the peptidase S16 family.

It localises to the peroxisome matrix. The enzyme catalyses Hydrolysis of proteins in presence of ATP.. Functionally, ATP-dependent serine protease that mediates the selective degradation of misfolded and unassembled polypeptides in the peroxisomal matrix. Necessary for type 2 peroxisome targeting signal (PTS2)-containing protein processing and facilitates peroxisome matrix protein import. The polypeptide is Lon protease homolog 2, peroxisomal (lonp2) (Danio rerio (Zebrafish)).